Reading from the N-terminus, the 186-residue chain is TATA-box-binding protein D (186 aa).

Repeat copies occupy residues 10-86 (IENV…VEDL) and 101-179 (VQNI…HERL).

It belongs to the TBP family.

In terms of biological role, general factor that plays a role in the activation of archaeal genes transcribed by RNA polymerase. Binds specifically to the TATA box promoter element which lies close to the position of transcription initiation. The protein is TATA-box-binding protein D (tbpD) of Halobacterium salinarum (strain ATCC 700922 / JCM 11081 / NRC-1) (Halobacterium halobium).